The sequence spans 199 residues: Inner membrane-spanning protein YciB (199 aa).

The next 6 helical transmembrane spans lie at 7 to 27 (HPLF…AANA), 32 to 52 (FVAT…SYVV), 56 to 76 (IPLM…LTLV), 93 to 113 (LFAG…AIMF), 126 to 146 (VLTL…ELIW), and 153 to 173 (FWVN…AMMQ).

Belongs to the YciB family.

It is found in the cell inner membrane. Plays a role in cell envelope biogenesis, maintenance of cell envelope integrity and membrane homeostasis. This Nitrobacter hamburgensis (strain DSM 10229 / NCIMB 13809 / X14) protein is Inner membrane-spanning protein YciB.